The following is a 309-amino-acid chain: Methionyl-tRNA formyltransferase (309 aa).

Residue 109 to 112 participates in (6S)-5,6,7,8-tetrahydrofolate binding; that stretch reads SLLP.

Belongs to the Fmt family.

It catalyses the reaction L-methionyl-tRNA(fMet) + (6R)-10-formyltetrahydrofolate = N-formyl-L-methionyl-tRNA(fMet) + (6S)-5,6,7,8-tetrahydrofolate + H(+). Attaches a formyl group to the free amino group of methionyl-tRNA(fMet). The formyl group appears to play a dual role in the initiator identity of N-formylmethionyl-tRNA by promoting its recognition by IF2 and preventing the misappropriation of this tRNA by the elongation apparatus. The polypeptide is Methionyl-tRNA formyltransferase (Thiobacillus denitrificans (strain ATCC 25259 / T1)).